The following is a 392-amino-acid chain: Histidinol-phosphate aminotransferase (392 aa).

Residues 1-24 (MSAVLKDPIPAPGRPESTRPEPRP) are disordered. Lys236 bears the N6-(pyridoxal phosphate)lysine mark.

It belongs to the class-II pyridoxal-phosphate-dependent aminotransferase family. Histidinol-phosphate aminotransferase subfamily. In terms of assembly, homodimer. Pyridoxal 5'-phosphate is required as a cofactor.

The enzyme catalyses L-histidinol phosphate + 2-oxoglutarate = 3-(imidazol-4-yl)-2-oxopropyl phosphate + L-glutamate. Its pathway is amino-acid biosynthesis; L-histidine biosynthesis; L-histidine from 5-phospho-alpha-D-ribose 1-diphosphate: step 7/9. The polypeptide is Histidinol-phosphate aminotransferase (Xanthobacter autotrophicus (strain ATCC BAA-1158 / Py2)).